Reading from the N-terminus, the 202-residue chain is Imidazoleglycerol-phosphate dehydratase (202 aa).

The protein belongs to the imidazoleglycerol-phosphate dehydratase family.

It is found in the cytoplasm. The catalysed reaction is D-erythro-1-(imidazol-4-yl)glycerol 3-phosphate = 3-(imidazol-4-yl)-2-oxopropyl phosphate + H2O. It participates in amino-acid biosynthesis; L-histidine biosynthesis; L-histidine from 5-phospho-alpha-D-ribose 1-diphosphate: step 6/9. The chain is Imidazoleglycerol-phosphate dehydratase from Brucella anthropi (strain ATCC 49188 / DSM 6882 / CCUG 24695 / JCM 21032 / LMG 3331 / NBRC 15819 / NCTC 12168 / Alc 37) (Ochrobactrum anthropi).